The sequence spans 551 residues: Periplasmic [NiFe] hydrogenase large subunit (551 aa).

Residues Cys65, Cys68, Cys530, and Cys533 each coordinate Ni(2+). The propeptide occupies 537-551; that stretch reads VIDPESNQVHKFRIL.

Belongs to the [NiFe]/[NiFeSe] hydrogenase large subunit family. Heterodimer of a large and a small subunit. Ni(2+) serves as cofactor.

The protein resides in the periplasm. The catalysed reaction is 2 Fe(III)-[cytochrome c3] + H2 = 2 Fe(II)-[cytochrome c3] + 2 H(+). This Megalodesulfovibrio gigas (Desulfovibrio gigas) protein is Periplasmic [NiFe] hydrogenase large subunit (hydB).